Reading from the N-terminus, the 166-residue chain is NAD(P)H-quinone oxidoreductase subunit I, chloroplastic (166 aa).

4Fe-4S ferredoxin-type domains lie at G55 to K84 and L95 to E124. The [4Fe-4S] cluster site is built by C64, C67, C70, C74, C104, C107, C110, and C114.

The protein belongs to the complex I 23 kDa subunit family. As to quaternary structure, NDH is composed of at least 16 different subunits, 5 of which are encoded in the nucleus. Requires [4Fe-4S] cluster as cofactor.

The protein localises to the plastid. Its subcellular location is the chloroplast thylakoid membrane. The enzyme catalyses a plastoquinone + NADH + (n+1) H(+)(in) = a plastoquinol + NAD(+) + n H(+)(out). It carries out the reaction a plastoquinone + NADPH + (n+1) H(+)(in) = a plastoquinol + NADP(+) + n H(+)(out). Its function is as follows. NDH shuttles electrons from NAD(P)H:plastoquinone, via FMN and iron-sulfur (Fe-S) centers, to quinones in the photosynthetic chain and possibly in a chloroplast respiratory chain. The immediate electron acceptor for the enzyme in this species is believed to be plastoquinone. Couples the redox reaction to proton translocation, and thus conserves the redox energy in a proton gradient. The chain is NAD(P)H-quinone oxidoreductase subunit I, chloroplastic from Silphium perfoliatum (Cup plant).